An 83-amino-acid chain; its full sequence is Small ribosomal subunit protein bS18A (83 aa).

The protein belongs to the bacterial ribosomal protein bS18 family. As to quaternary structure, part of the 30S ribosomal subunit. Forms a tight heterodimer with protein bS6.

Its function is as follows. Binds as a heterodimer with protein bS6 to the central domain of the 16S rRNA, where it helps stabilize the platform of the 30S subunit. The sequence is that of Small ribosomal subunit protein bS18A from Nocardia farcinica (strain IFM 10152).